The chain runs to 272 residues: Glucosyl-3-phosphoglycerate/mannosyl-3-phosphoglycerate phosphatase (272 aa).

The Nucleophile role is filled by aspartate 8. Mg(2+) contacts are provided by aspartate 8, aspartate 10, and aspartate 214.

The protein belongs to the HAD-like hydrolase superfamily. MPGP family. Monomer. Requires Co(2+) as cofactor. It depends on Mg(2+) as a cofactor. Ni(2+) serves as cofactor.

The catalysed reaction is (2R)-2-O-(alpha-D-glucopyranosyl)-3-phospho-glycerate + H2O = (2R)-2-O-(alpha-D-glucopyranosyl)-glycerate + phosphate. It carries out the reaction 2-O-(alpha-D-mannosyl)-3-phosphoglycerate + H2O = (2R)-2-O-(alpha-D-mannosyl)-glycerate + phosphate. Involved in the biosynthesis of glucosylglycerate. Catalyzes the dephosphorylation of glucosyl-3-phosphoglycerate (GPG) and mannosyl-3-phosphoglycerate (MPG) to glucosylglycerate (GG) and mannosylglycerate (MG), respectively. This chain is Glucosyl-3-phosphoglycerate/mannosyl-3-phosphoglycerate phosphatase, found in Methanococcoides burtonii (strain DSM 6242 / NBRC 107633 / OCM 468 / ACE-M).